The chain runs to 253 residues: Imidazole glycerol phosphate synthase subunit HisF (253 aa).

Catalysis depends on residues Asp-11 and Asp-130.

It belongs to the HisA/HisF family. In terms of assembly, heterodimer of HisH and HisF.

The protein localises to the cytoplasm. The enzyme catalyses 5-[(5-phospho-1-deoxy-D-ribulos-1-ylimino)methylamino]-1-(5-phospho-beta-D-ribosyl)imidazole-4-carboxamide + L-glutamine = D-erythro-1-(imidazol-4-yl)glycerol 3-phosphate + 5-amino-1-(5-phospho-beta-D-ribosyl)imidazole-4-carboxamide + L-glutamate + H(+). It functions in the pathway amino-acid biosynthesis; L-histidine biosynthesis; L-histidine from 5-phospho-alpha-D-ribose 1-diphosphate: step 5/9. IGPS catalyzes the conversion of PRFAR and glutamine to IGP, AICAR and glutamate. The HisF subunit catalyzes the cyclization activity that produces IGP and AICAR from PRFAR using the ammonia provided by the HisH subunit. The polypeptide is Imidazole glycerol phosphate synthase subunit HisF (Cereibacter sphaeroides (strain KD131 / KCTC 12085) (Rhodobacter sphaeroides)).